We begin with the raw amino-acid sequence, 121 residues long: Amelogenin (121 aa).

Disordered stretches follow at residues 1–20 (LHHQIIPVLSQQQTPTHALQ) and 32–121 (QPMQ…WPAT). The segment covering 48-58 (SVTPTQHHQSN) has biased composition (polar residues). Over residues 59 to 71 (LPQPAQQPFQPQV) the composition is skewed to low complexity. Residues 85–111 (PAHPMPPMPQPPLPPMFPMQPLPPLLP) show a composition bias toward pro residues.

Belongs to the amelogenin family.

The protein resides in the secreted. It localises to the extracellular space. The protein localises to the extracellular matrix. In terms of biological role, plays a role in the biomineralization of teeth. Seems to regulate the formation of crystallites during the secretory stage of tooth enamel development. Thought to play a major role in the structural organization and mineralization of developing enamel. The polypeptide is Amelogenin (AMEL) (Ornithorhynchus anatinus (Duckbill platypus)).